A 351-amino-acid polypeptide reads, in one-letter code: ATP-dependent 6-phosphofructokinase subunit gamma (351 aa).

Heterododecamer of 4 alpha, 4 beta and 4 gamma chains. The gamma chain bridges the N-terminal halves of the alpha and beta subunits.

It is found in the cytoplasm. It functions in the pathway carbohydrate degradation; glycolysis; D-glyceraldehyde 3-phosphate and glycerone phosphate from D-glucose: step 3/4. Structural subunit of pyrophosphate--fructose 6-phosphate 1-phosphotransferase. Not required for catalytic activity. Fine-tunes allosteric regulation of the ATP-PFK by ATP, fructose 2,6-bisphosphate and AMP. This chain is ATP-dependent 6-phosphofructokinase subunit gamma (PFK3), found in Komagataella pastoris (Yeast).